The primary structure comprises 471 residues: Ribulose bisphosphate carboxylase large chain (471 aa).

Substrate is bound by residues asparagine 115 and threonine 165. Lysine 167 acts as the Proton acceptor in catalysis. A substrate-binding site is contributed by lysine 169. Residues lysine 193, aspartate 195, and glutamate 196 each contribute to the Mg(2+) site. An N6-carboxylysine modification is found at lysine 193. The active-site Proton acceptor is histidine 286. Residues arginine 287, histidine 319, and serine 371 each contribute to the substrate site.

This sequence belongs to the RuBisCO large chain family. Type I subfamily. Heterohexadecamer of 8 large chains and 8 small chains. Requires Mg(2+) as cofactor.

The protein localises to the carboxysome. It carries out the reaction 2 (2R)-3-phosphoglycerate + 2 H(+) = D-ribulose 1,5-bisphosphate + CO2 + H2O. The catalysed reaction is D-ribulose 1,5-bisphosphate + O2 = 2-phosphoglycolate + (2R)-3-phosphoglycerate + 2 H(+). RuBisCO catalyzes two reactions: the carboxylation of D-ribulose 1,5-bisphosphate, the primary event in carbon dioxide fixation, as well as the oxidative fragmentation of the pentose substrate in the photorespiration process. Both reactions occur simultaneously and in competition at the same active site. The chain is Ribulose bisphosphate carboxylase large chain from Prochlorococcus marinus (strain MIT 9301).